The primary structure comprises 467 residues: Transcription factor fos-1 (467 aa).

Positions 1–22 (MFEQPSSTTNTTTSSGSGSDSN) are enriched in low complexity. 2 disordered regions span residues 1–38 (MFEQPSSTTNTTTSSGSGSDSNHYFELGPRNPINQAHP) and 139–179 (QYST…AAAR). Positions 163–226 (DDKRLKRRQR…NSLKNYLETH (64 aa)) constitute a bZIP domain. The basic motif stretch occupies residues 165–205 (KRLKRRQRNKEAAARCRQRRIDLMKELQDQVNDFKNSNDKK). The leucine-zipper stretch occupies residues 212–219 (IRNKLNSL). 2 disordered regions span residues 266–291 (RADSVPYSIRSGHSSSSSEQHSPVED) and 395–467 (QPIT…LRPL). The segment covering 273–286 (SIRSGHSSSSSEQH) has biased composition (low complexity). Over residues 434–454 (SSNTGLTPSGQPTMNFVSTPT) the composition is skewed to polar residues. Residues Thr-440, Thr-452, and Thr-454 each carry the phosphothreonine modification.

This sequence belongs to the bZIP family. Fos subfamily. Homodimer. Heterodimer; with jun-1. Interacts with kgb-1 and hda-1. May be phosphorylated by kgb-1. Phosphorylation at Thr-440 increases sensitivity to heavy metal stress. Phosphorylation inhibits homodimer formation, and promotes association with target promoters. In terms of tissue distribution, expressed in anchor cells. Isoform a is expressed in somatic gonad cells that neighbor anchor cells. Isoform b is expressed in vulval cells, the uterine cells that neighbor anchor cells and the spermatheca.

It localises to the nucleus. Its function is as follows. Developmentally regulated transcription factor which binds and recognizes the enhancer DNA sequence 5'-TGA[CG]TCA-3'. In terms of biological role, plays a role the development of the reproductive system, controlling events including anchor cell (AC) fusion and invasion. Regulates downstream transcriptional targets, including zmp-1, cdh-3, him-4 and mig10b, to promote the removal of the gonadal basement membrane during AC invasion. Regulates aff-1 expression to promote AC fusion. With jun-1 regulates egl-1 and lin-12 expression to allow uterine cell specification and development. Functionally, required for ovulation. Controls plc-1 expression in the spermatheca to regulate spermathecal valve dilation. Acts with hda-1 as a downstream repressor of the kgb-1 mediated stress response pathway that transcriptionally represses genes involved in the response to heavy metals, such as kreg-1. This is Transcription factor fos-1 from Caenorhabditis elegans.